Consider the following 414-residue polypeptide: Eukaryotic initiation factor 4A-3 (414 aa).

A Q motif motif is present at residues 41-69; that stretch reads ESFDDMGLQENLLRGIYAYGFEKPSAIQQ. The Helicase ATP-binding domain occupies 72–242; it reads IVPFCKGLDV…RKFMNKPVRI (171 aa). Position 85–92 (85–92) interacts with ATP; that stretch reads AQSGTGKT. Positions 190 to 193 match the DEAD box motif; it reads DEAD. One can recognise a Helicase C-terminal domain in the interval 253 to 414; that stretch reads GIKQFYVNVE…ELPANVADLL (162 aa).

Belongs to the DEAD box helicase family. eIF4A subfamily. EIF4F is a multi-subunit complex, the composition of which varies with external and internal environmental conditions. It is composed of at least EIF4A, EIF4E and EIF4G. Interacts with DRM2 (via UBA domains).

It localises to the cytoplasm. The protein resides in the nucleus. The catalysed reaction is ATP + H2O = ADP + phosphate + H(+). In terms of biological role, ATP-dependent RNA helicase which is a subunit of the eIF4F complex involved in cap recognition and is required for mRNA binding to ribosome. In the current model of translation initiation, eIF4A unwinds RNA secondary structures in the 5'-UTR of mRNAs which is necessary to allow efficient binding of the small ribosomal subunit, and subsequent scanning for the initiator codon. This is Eukaryotic initiation factor 4A-3 from Oryza sativa subsp. japonica (Rice).